The sequence spans 215 residues: Interleukin-12 subunit alpha (215 aa).

The first 22 residues, 1 to 22, serve as a signal peptide directing secretion; that stretch reads MCQSRYLLFLATLALLNHLSLA. 3 disulfides stabilise this stretch: Cys33–Cys106, Cys60–Cys192, and Cys81–Cys119. Asn89 carries N-linked (GlcNAc...) asparagine glycosylation.

It belongs to the IL-6 superfamily. Heterodimer with IL12B; disulfide-linked. This heterodimer is known as interleukin IL-12. Heterodimer with EBI3/IL27B; not disulfide-linked. This heterodimer is known as interleukin IL-35. Interacts with NBR1; this interaction promotes IL-12 secretion.

Its subcellular location is the secreted. Functionally, heterodimerizes with IL12B to form the IL-12 cytokine or with EBI3/IL27B to form the IL-35 cytokine. IL-12 is primarily produced by professional antigen-presenting cells (APCs) such as B-cells and dendritic cells (DCs) as well as macrophages and granulocytes and regulates T-cell and natural killer-cell responses, induces the production of interferon-gamma (IFN-gamma), favors the differentiation of T-helper 1 (Th1) cells and is an important link between innate resistance and adaptive immunity. Mechanistically, exerts its biological effects through a receptor composed of IL12R1 and IL12R2 subunits. Binding to the receptor results in the rapid tyrosine phosphorylation of a number of cellular substrates including the JAK family kinases TYK2 and JAK2. In turn, recruited STAT4 gets phosphorylated and translocates to the nucleus where it regulates cytokine/growth factor responsive genes. As part of IL-35, plays essential roles in maintaining the immune homeostasis of the liver microenvironment and also functions as an immune-suppressive cytokine. Mediates biological events through unconventional receptors composed of IL12RB2 and gp130/IL6ST heterodimers or homodimers. Signaling requires the transcription factors STAT1 and STAT4, which form a unique heterodimer that binds to distinct DNA sites. The polypeptide is Interleukin-12 subunit alpha (Il12a) (Mus musculus (Mouse)).